We begin with the raw amino-acid sequence, 316 residues long: Methionyl-tRNA formyltransferase (316 aa).

Ser112–Pro115 provides a ligand contact to (6S)-5,6,7,8-tetrahydrofolate.

This sequence belongs to the Fmt family.

The enzyme catalyses L-methionyl-tRNA(fMet) + (6R)-10-formyltetrahydrofolate = N-formyl-L-methionyl-tRNA(fMet) + (6S)-5,6,7,8-tetrahydrofolate + H(+). Attaches a formyl group to the free amino group of methionyl-tRNA(fMet). The formyl group appears to play a dual role in the initiator identity of N-formylmethionyl-tRNA by promoting its recognition by IF2 and preventing the misappropriation of this tRNA by the elongation apparatus. The polypeptide is Methionyl-tRNA formyltransferase (Flavobacterium psychrophilum (strain ATCC 49511 / DSM 21280 / CIP 103535 / JIP02/86)).